The primary structure comprises 416 residues: D-amino acid dehydrogenase (416 aa).

3–17 (ITILGSGVIGVTTAY) is a binding site for FAD.

The protein belongs to the DadA oxidoreductase family. FAD is required as a cofactor.

It catalyses the reaction a D-alpha-amino acid + A + H2O = a 2-oxocarboxylate + AH2 + NH4(+). Functionally, oxidative deamination of D-amino acids. The chain is D-amino acid dehydrogenase from Brucella suis biovar 1 (strain 1330).